A 580-amino-acid chain; its full sequence is G1/S-specific cyclin CLN3 (580 aa).

Low complexity predominate over residues 454–469; the sequence is FTPTSSSSSPSPFNSP. Disordered regions lie at residues 454–498 and 546–580; these read FTPT…QNSF and MATAHPCSAPTQLKKRSTSSVDCDFNDSSNLKKTR. Composition is skewed to polar residues over residues 470-480 and 563-580; these read YKTSSSMTTPD and TSSVDCDFNDSSNLKKTR.

It belongs to the cyclin family.

Functionally, essential for the control of the cell cycle at the G1/S (start) transition. CLN3 may be an upstream activator of the G1 cyclins which directly catalyze start. In Saccharomyces cerevisiae (strain ATCC 204508 / S288c) (Baker's yeast), this protein is G1/S-specific cyclin CLN3 (CLN3).